The primary structure comprises 78 residues: DNA-directed RNA polymerase subunit omega (78 aa).

The protein belongs to the RNA polymerase subunit omega family. In cyanobacteria the RNAP catalytic core is composed of 2 alpha, 1 beta, 1 beta', 1 gamma and 1 omega subunit. When a sigma factor is associated with the core the holoenzyme is formed, which can initiate transcription.

The enzyme catalyses RNA(n) + a ribonucleoside 5'-triphosphate = RNA(n+1) + diphosphate. Promotes RNA polymerase assembly. Latches the N- and C-terminal regions of the beta' subunit thereby facilitating its interaction with the beta and alpha subunits. In Trichormus variabilis (strain ATCC 29413 / PCC 7937) (Anabaena variabilis), this protein is DNA-directed RNA polymerase subunit omega.